The following is a 380-amino-acid chain: Cytochrome b (380 aa).

Transmembrane regions (helical) follow at residues 34 to 54 (FGSL…LLAT), 78 to 99 (WLIR…YLHI), 114 to 134 (WNTG…GYVL), and 179 to 199 (FFAL…IHLA). His-84 and His-98 together coordinate heme b. Residues His-183 and His-197 each contribute to the heme b site. His-202 provides a ligand contact to a ubiquinone. A run of 4 helical transmembrane segments spans residues 227 to 247 (LKDI…ALFS), 289 to 309 (LGGV…PFLH), 321 to 341 (LSQI…WIGS), and 348 to 368 (FIII…ILFP).

The protein belongs to the cytochrome b family. In terms of assembly, the cytochrome bc1 complex contains 11 subunits: 3 respiratory subunits (MT-CYB, CYC1 and UQCRFS1), 2 core proteins (UQCRC1 and UQCRC2) and 6 low-molecular weight proteins (UQCRH/QCR6, UQCRB/QCR7, UQCRQ/QCR8, UQCR10/QCR9, UQCR11/QCR10 and a cleavage product of UQCRFS1). This cytochrome bc1 complex then forms a dimer. The cofactor is heme b.

The protein resides in the mitochondrion inner membrane. Its function is as follows. Component of the ubiquinol-cytochrome c reductase complex (complex III or cytochrome b-c1 complex) that is part of the mitochondrial respiratory chain. The b-c1 complex mediates electron transfer from ubiquinol to cytochrome c. Contributes to the generation of a proton gradient across the mitochondrial membrane that is then used for ATP synthesis. This is Cytochrome b (MT-CYB) from Callipepla gambelii (Gambel's quail).